A 342-amino-acid chain; its full sequence is tRNA N6-adenosine threonylcarbamoyltransferase (342 aa).

His114 and His118 together coordinate Fe cation. Residues 136 to 140 (LVSGG), Asp169, Gly182, Asp186, and Asn275 each bind substrate. Position 301 (Asp301) interacts with Fe cation.

It belongs to the KAE1 / TsaD family. Fe(2+) is required as a cofactor.

It localises to the cytoplasm. The enzyme catalyses L-threonylcarbamoyladenylate + adenosine(37) in tRNA = N(6)-L-threonylcarbamoyladenosine(37) in tRNA + AMP + H(+). Required for the formation of a threonylcarbamoyl group on adenosine at position 37 (t(6)A37) in tRNAs that read codons beginning with adenine. Is involved in the transfer of the threonylcarbamoyl moiety of threonylcarbamoyl-AMP (TC-AMP) to the N6 group of A37, together with TsaE and TsaB. TsaD likely plays a direct catalytic role in this reaction. This chain is tRNA N6-adenosine threonylcarbamoyltransferase, found in Streptococcus pyogenes serotype M4 (strain MGAS10750).